The sequence spans 96 residues: Large ribosomal subunit protein bL28 (96 aa).

The tract at residues 1-23 (MSRVCELSGKAPMTGNTVSHANN) is disordered.

It belongs to the bacterial ribosomal protein bL28 family.

The protein is Large ribosomal subunit protein bL28 of Cereibacter sphaeroides (strain ATCC 17025 / ATH 2.4.3) (Rhodobacter sphaeroides).